The chain runs to 188 residues: RWD domain-containing protein 4 (188 aa).

The 103-residue stretch at 9 to 111 (MELEALRSIY…EYAKDNKEQF (103 aa)) folds into the RWD domain. A disordered region spans residues 132–167 (TPSAAPSSKKKDKKEQLSKAQKRKLADKTDHKGELP). Positions 155–166 (KLADKTDHKGEL) are enriched in basic and acidic residues.

The chain is RWD domain-containing protein 4 (Rwdd4) from Rattus norvegicus (Rat).